Reading from the N-terminus, the 377-residue chain is MSNEGKPLQLTESKKIDAKSGEKEKALSLVVGQIERNFGKGSIMRLGDASKMRVETISTGALTLDLALGGGYPKGRVIEVYGPESSGKTTLTLHAIAEIQRNGGVAAFVDAEHALDPVYAASLGVDVENLLVSQPDTGEMALEIVDQLIRSAAVDLVVVDSVAALTPRSEIEGEMGDHSVGAQARLMSQAMRKITGNIGKSGCTVIFLNQLRLKIGITYGNPETTTGGNALKFYASVRLDIRRIQTLKRGTEEYGIRAKVKVAKNKVAPPFRIAEFDILFGKGISTLGCLLDLADETNVVTRKGAWYSYEGDNIGQGRDNTITWLEQNPESKEIIEKLVKEKLTEGSEVSANSMRPLASAARQASSRPNLSQVSANG.

82–89 (GPESSGKT) provides a ligand contact to ATP. The interval 345-377 (EGSEVSANSMRPLASAARQASSRPNLSQVSANG) is disordered. Over residues 362–377 (RQASSRPNLSQVSANG) the composition is skewed to polar residues.

This sequence belongs to the RecA family.

Its subcellular location is the cytoplasm. In terms of biological role, can catalyze the hydrolysis of ATP in the presence of single-stranded DNA, the ATP-dependent uptake of single-stranded DNA by duplex DNA, and the ATP-dependent hybridization of homologous single-stranded DNAs. It interacts with LexA causing its activation and leading to its autocatalytic cleavage. The sequence is that of Protein RecA from Prochlorococcus marinus (strain NATL2A).